We begin with the raw amino-acid sequence, 194 residues long: Flagellin A2 (194 aa).

A propeptide spanning residues 1 to 12 (MFEFITDEDERG) is cleaved from the precursor.

Belongs to the archaeal flagellin family. Glycosylated.

The protein localises to the archaeal flagellum. Flagellin is the subunit protein which polymerizes to form the filaments of archaeal flagella. This is Flagellin A2 (flaA2) from Halobacterium salinarum (strain ATCC 700922 / JCM 11081 / NRC-1) (Halobacterium halobium).